A 109-amino-acid polypeptide reads, in one-letter code: MNKFLRHSLLLALLTGALSGVANAQTDKLIIESGDNARTRQDAAMDKEQWNDTRSLRQKVNKRTEKEWDKADVAFDAKDNCEKSANLNAYWEPNTLRCLDRRTGRVINP.

Residues 1–24 (MNKFLRHSLLLALLTGALSGVANA) form the signal peptide. The segment covering 38–55 (RTRQDAAMDKEQWNDTRS) has biased composition (basic and acidic residues). The tract at residues 38–63 (RTRQDAAMDKEQWNDTRSLRQKVNKR) is disordered.

It belongs to the UPF0482 family.

The sequence is that of UPF0482 protein ESA_01750 from Cronobacter sakazakii (strain ATCC BAA-894) (Enterobacter sakazakii).